Reading from the N-terminus, the 424-residue chain is Putative ankyrin repeat protein R858 (424 aa).

ANK repeat units follow at residues 115-144, 147-177, 184-215, and 219-252; these read HLMC…FTKR, TDHT…SDYF, INDS…SINY, and TGST…DIHE.

This chain is Putative ankyrin repeat protein R858, found in Acanthamoeba polyphaga (Amoeba).